Consider the following 259-residue polypeptide: 5'-nucleotidase SurE (259 aa).

Residues D13, D14, S44, and N101 each coordinate a divalent metal cation.

The protein belongs to the SurE nucleotidase family. A divalent metal cation serves as cofactor.

It localises to the cytoplasm. The enzyme catalyses a ribonucleoside 5'-phosphate + H2O = a ribonucleoside + phosphate. In terms of biological role, nucleotidase that shows phosphatase activity on nucleoside 5'-monophosphates. The sequence is that of 5'-nucleotidase SurE from Flavobacterium johnsoniae (strain ATCC 17061 / DSM 2064 / JCM 8514 / BCRC 14874 / CCUG 350202 / NBRC 14942 / NCIMB 11054 / UW101) (Cytophaga johnsonae).